A 283-amino-acid chain; its full sequence is MKLAAPNPQALAPLPIDVVSIQSQVVYGQVGNSVAVPVFNGFGLRVAAVPTVVLSNTPHYPSMHGGAVPLDWFEGYLADLGARGALAGVRVVQLGYLGGPAQAEALGRWIAGLVAVRPDLRVHIDPVIGDHDSGVYVAPGMVAAYRDHLLPLAQGLTPNGFELECLTGLPTGTMEQTIAAARTLLGGRARWVIVTSAAPATWPPGRVRVAVVTHDDAQVLEHAHVDTAPKGTGDMFGAALTGHLLAGQPVAEAARRAALQVIEALERTREAGCGELLLAGPLR.

Positions 23 and 59 each coordinate substrate. Asp-125 contributes to the ATP binding site. Mg(2+) is bound at residue Tyr-136. ATP is bound by residues Thr-157, Glu-162, Thr-195, 222 to 225 (HAHV), and Thr-232. Residue Glu-162 participates in Mg(2+) binding. Asp-234 contacts substrate.

Belongs to the pyridoxine kinase family. PdxK subfamily. In terms of assembly, homodimer. Mg(2+) serves as cofactor.

It carries out the reaction pyridoxal + ATP = pyridoxal 5'-phosphate + ADP + H(+). It catalyses the reaction pyridoxine + ATP = pyridoxine 5'-phosphate + ADP + H(+). The enzyme catalyses pyridoxamine + ATP = pyridoxamine 5'-phosphate + ADP + H(+). It participates in cofactor metabolism; pyridoxal 5'-phosphate salvage; pyridoxal 5'-phosphate from pyridoxal: step 1/1. It functions in the pathway cofactor metabolism; pyridoxal 5'-phosphate salvage; pyridoxine 5'-phosphate from pyridoxine: step 1/1. Its pathway is cofactor metabolism; pyridoxal 5'-phosphate salvage; pyridoxamine 5'-phosphate from pyridoxamine: step 1/1. Its function is as follows. B6-vitamer kinase involved in the salvage pathway of pyridoxal 5'-phosphate (PLP). Catalyzes the phosphorylation of pyridoxine (PN), pyridoxal (PL), and pyridoxamine (PM), forming their respective 5'-phosphorylated esters, i.e. PNP, PLP and PMP. The chain is Pyridoxine/pyridoxal/pyridoxamine kinase from Bordetella bronchiseptica (strain ATCC BAA-588 / NCTC 13252 / RB50) (Alcaligenes bronchisepticus).